The sequence spans 274 residues: Putative HTH-type transcriptional regulator RmpR (274 aa).

The HTH gntR-type domain maps to 18-88 (IERADAIVER…RSGGTFVVNQ (71 aa)). Residues 46-65 (EAALSEMFGVGGATLREALS) constitute a DNA-binding region (H-T-H motif). Residues 250 to 265 (SRPSSPATAPDGSSSA) are compositionally biased toward polar residues. Positions 250–274 (SRPSSPATAPDGSSSAEAAMIQEGQ) are disordered.

May regulate the transcription of the rmpAB operon. The polypeptide is Putative HTH-type transcriptional regulator RmpR (rmpR) (Mycobacterium gastri).